A 314-amino-acid chain; its full sequence is Methionyl-tRNA formyltransferase (314 aa).

110 to 113 lines the (6S)-5,6,7,8-tetrahydrofolate pocket; sequence SLLP.

This sequence belongs to the Fmt family.

It carries out the reaction L-methionyl-tRNA(fMet) + (6R)-10-formyltetrahydrofolate = N-formyl-L-methionyl-tRNA(fMet) + (6S)-5,6,7,8-tetrahydrofolate + H(+). Its function is as follows. Attaches a formyl group to the free amino group of methionyl-tRNA(fMet). The formyl group appears to play a dual role in the initiator identity of N-formylmethionyl-tRNA by promoting its recognition by IF2 and preventing the misappropriation of this tRNA by the elongation apparatus. This chain is Methionyl-tRNA formyltransferase, found in Bacillus thuringiensis subsp. konkukian (strain 97-27).